The primary structure comprises 103 residues: NADH-quinone oxidoreductase subunit K (103 aa).

3 helical membrane-spanning segments follow: residues 6-26 (IEYY…GFLL), 30-50 (LLVL…TLVA), and 66-86 (FFVI…VLAF).

The protein belongs to the complex I subunit 4L family. In terms of assembly, NDH-1 is composed of 14 different subunits. Subunits NuoA, H, J, K, L, M, N constitute the membrane sector of the complex.

It localises to the cell inner membrane. The enzyme catalyses a quinone + NADH + 5 H(+)(in) = a quinol + NAD(+) + 4 H(+)(out). Its function is as follows. NDH-1 shuttles electrons from NADH, via FMN and iron-sulfur (Fe-S) centers, to quinones in the respiratory chain. The immediate electron acceptor for the enzyme in this species is believed to be ubiquinone. Couples the redox reaction to proton translocation (for every two electrons transferred, four hydrogen ions are translocated across the cytoplasmic membrane), and thus conserves the redox energy in a proton gradient. The polypeptide is NADH-quinone oxidoreductase subunit K (Sorangium cellulosum (strain So ce56) (Polyangium cellulosum (strain So ce56))).